Reading from the N-terminus, the 437-residue chain is Adenylosuccinate synthetase (437 aa).

GTP-binding positions include 12-18 and 40-42; these read GDEGKGK and GHT. Residue Asp-13 is the Proton acceptor of the active site. Asp-13 and Gly-40 together coordinate Mg(2+). IMP is bound by residues 13-16, 38-41, Thr-128, Arg-142, Gln-223, Thr-238, and Arg-302; these read DEGK and NAGH. The active-site Proton donor is the His-41. 298–304 is a substrate binding site; sequence TTTGRRR. Residues Arg-304, 330-332, and 412-414 each bind GTP; these read KLD and SLG.

This sequence belongs to the adenylosuccinate synthetase family. As to quaternary structure, homodimer. The cofactor is Mg(2+).

It localises to the cytoplasm. The enzyme catalyses IMP + L-aspartate + GTP = N(6)-(1,2-dicarboxyethyl)-AMP + GDP + phosphate + 2 H(+). Its pathway is purine metabolism; AMP biosynthesis via de novo pathway; AMP from IMP: step 1/2. Its function is as follows. Plays an important role in the de novo pathway of purine nucleotide biosynthesis. Catalyzes the first committed step in the biosynthesis of AMP from IMP. The sequence is that of Adenylosuccinate synthetase from Synechococcus sp. (strain CC9311).